The chain runs to 225 residues: PKHD-type hydroxylase YbiX (225 aa).

Residues 78 to 177 enclose the Fe2OG dioxygenase domain; it reads TLSTPLFNRY…RVASFMWIQS (100 aa). Residues H96, D98, and H158 each contribute to the Fe cation site. R168 is a 2-oxoglutarate binding site.

It depends on Fe(2+) as a cofactor. Requires L-ascorbate as cofactor.

The chain is PKHD-type hydroxylase YbiX from Shigella sonnei (strain Ss046).